The chain runs to 927 residues: Valine--tRNA ligase (927 aa).

The short motif at proline 45 to histidine 55 is the 'HIGH' region element. Residues lysine 571 to serine 575 carry the 'KMSKS' region motif. Residue lysine 574 participates in ATP binding. Residues serine 856–alanine 917 adopt a coiled-coil conformation.

The protein belongs to the class-I aminoacyl-tRNA synthetase family. ValS type 1 subfamily. Monomer.

It is found in the cytoplasm. It catalyses the reaction tRNA(Val) + L-valine + ATP = L-valyl-tRNA(Val) + AMP + diphosphate. Its function is as follows. Catalyzes the attachment of valine to tRNA(Val). As ValRS can inadvertently accommodate and process structurally similar amino acids such as threonine, to avoid such errors, it has a 'posttransfer' editing activity that hydrolyzes mischarged Thr-tRNA(Val) in a tRNA-dependent manner. This is Valine--tRNA ligase from Mesorhizobium japonicum (strain LMG 29417 / CECT 9101 / MAFF 303099) (Mesorhizobium loti (strain MAFF 303099)).